The sequence spans 315 residues: Acetyl-coenzyme A carboxylase carboxyl transferase subunit alpha (315 aa).

A CoA carboxyltransferase C-terminal domain is found at 40–293 (LQDKSKTLTE…REELSSQLAM (254 aa)).

It belongs to the AccA family. Acetyl-CoA carboxylase is a heterohexamer composed of biotin carboxyl carrier protein (AccB), biotin carboxylase (AccC) and two subunits each of ACCase subunit alpha (AccA) and ACCase subunit beta (AccD).

Its subcellular location is the cytoplasm. The enzyme catalyses N(6)-carboxybiotinyl-L-lysyl-[protein] + acetyl-CoA = N(6)-biotinyl-L-lysyl-[protein] + malonyl-CoA. The protein operates within lipid metabolism; malonyl-CoA biosynthesis; malonyl-CoA from acetyl-CoA: step 1/1. Functionally, component of the acetyl coenzyme A carboxylase (ACC) complex. First, biotin carboxylase catalyzes the carboxylation of biotin on its carrier protein (BCCP) and then the CO(2) group is transferred by the carboxyltransferase to acetyl-CoA to form malonyl-CoA. This chain is Acetyl-coenzyme A carboxylase carboxyl transferase subunit alpha, found in Pseudomonas syringae pv. tomato (strain ATCC BAA-871 / DC3000).